The primary structure comprises 124 residues: Putative outer membrane protein CT_569 (124 aa).

The first 31 residues, 1-31, serve as a signal peptide directing secretion; that stretch reads MKKTKKRKQSITLVEMMVVITLIGIIGGALA.

It is found in the cell outer membrane. This chain is Putative outer membrane protein CT_569, found in Chlamydia trachomatis serovar D (strain ATCC VR-885 / DSM 19411 / UW-3/Cx).